Consider the following 95-residue polypeptide: Aspartyl/glutamyl-tRNA(Asn/Gln) amidotransferase subunit C (95 aa).

The protein belongs to the GatC family. In terms of assembly, heterotrimer of A, B and C subunits.

The catalysed reaction is L-glutamyl-tRNA(Gln) + L-glutamine + ATP + H2O = L-glutaminyl-tRNA(Gln) + L-glutamate + ADP + phosphate + H(+). It carries out the reaction L-aspartyl-tRNA(Asn) + L-glutamine + ATP + H2O = L-asparaginyl-tRNA(Asn) + L-glutamate + ADP + phosphate + 2 H(+). Its function is as follows. Allows the formation of correctly charged Asn-tRNA(Asn) or Gln-tRNA(Gln) through the transamidation of misacylated Asp-tRNA(Asn) or Glu-tRNA(Gln) in organisms which lack either or both of asparaginyl-tRNA or glutaminyl-tRNA synthetases. The reaction takes place in the presence of glutamine and ATP through an activated phospho-Asp-tRNA(Asn) or phospho-Glu-tRNA(Gln). The sequence is that of Aspartyl/glutamyl-tRNA(Asn/Gln) amidotransferase subunit C from Pseudomonas fluorescens (strain SBW25).